Reading from the N-terminus, the 181-residue chain is Dehydration-responsive element-binding protein 1E (181 aa).

Residues 14-26 (KKRAGRRIFKETR) carry the Nuclear localization signal motif. Positions 29–86 (IYRGVRRRDGDKWVCEVREPIHQRRVWLGTYPTADMAARAHDVAVLALRGRSACLNFS) form a DNA-binding region, AP2/ERF.

Belongs to the AP2/ERF transcription factor family. ERF subfamily.

It localises to the nucleus. Transcriptional activator that binds specifically to the DNA sequence 5'-[AG]CCGAC-3'. Binding to the C-repeat/DRE element mediates cold or dehydration-inducible transcription. CBF/DREB1 factors play a key role in freezing tolerance and cold acclimation. This is Dehydration-responsive element-binding protein 1E (DREB1E) from Arabidopsis thaliana (Mouse-ear cress).